Here is a 653-residue protein sequence, read N- to C-terminus: MTTPLIELQGVSRSYCQGDATVNVLNDIHLRIDPGEMVAIIGSSGSGKSTLMNILGCLDRPSGGEYRIRGRDVAQLTPDALAALRREHVGFIFQHYHLMPELSAVGNVEIPAVYANRPRQERRRRAAALLDRLGLAGKHHHCPAQLSGGQQQRVSIARALMNGGEIILADEPTGALDSASGKEVLAILTELNRQGHTLVIVTHDMAVARHARRIIEIRDGRIVADTRTDQTPLAPPLLPCSAHPRRRRGAQFADRVRESLHMALKAMNAHRMRTLLTMAGIVFGIAAVVTVVGLGEGAREQTLRRINFLGTNVISIYPGKDFFDENAGAIRTLVPADAVALARQGYVDSVSPELGTSARLRYRNKSANVDVIGVGESYFRVRGLSLAEGRTFTSQQVAQATTDAIIDDNARRTLFAATGQSPLGQTLLLNTMAVRVIGVAAADTNITGYHSDRIHIWLPYTTILHRLMGQQHVNGIVVSTGAGIDNAAAERTIEQLMLQRHGVKDFMLFNDDKIRRSVMKTSMTFSVLITMVAMIALFIGSLGVMNIMLVSVTERTHEIGVRMAVGARRGDIMQQFLIEAVLVCLTGGLLGVLLALSGGALFSALAGDIFPMVTSWPAVSGAFLCACAIGMVFGYWPARNAARLNPVEALSSE.

Residues 6–244 (IELQGVSRSY…PPLLPCSAHP (239 aa)) form the ABC transporter domain. An ATP-binding site is contributed by 42-49 (GSSGSGKS). 4 helical membrane-spanning segments follow: residues 275–295 (LLTM…VGLG), 525–545 (FSVL…LGVM), 576–596 (FLIE…LLAL), and 616–636 (WPAV…FGYW).

The protein belongs to the ABC transporter superfamily. Macrolide exporter (TC 3.A.1.122) family. As to quaternary structure, homodimer. Part of the tripartite efflux system MacAB-TolC, which is composed of an inner membrane transporter, MacB, a periplasmic membrane fusion protein, MacA, and an outer membrane component, TolC. The complex forms a large protein conduit and can translocate molecules across both the inner and outer membranes. Interacts with MacA.

The protein localises to the cell inner membrane. Functionally, part of the tripartite efflux system MacAB-TolC. MacB is a non-canonical ABC transporter that contains transmembrane domains (TMD), which form a pore in the inner membrane, and an ATP-binding domain (NBD), which is responsible for energy generation. Confers resistance against macrolides. This is Macrolide export ATP-binding/permease protein MacB from Sodalis glossinidius (strain morsitans).